The sequence spans 200 residues: Large ribosomal subunit protein uL4 (200 aa).

The disordered stretch occupies residues 38–68 (GRQGSKQQKTRSDVRGGGKRPWRQKGTGRAR). Residues 54 to 65 (GGKRPWRQKGTG) show a composition bias toward basic residues.

This sequence belongs to the universal ribosomal protein uL4 family. As to quaternary structure, part of the 50S ribosomal subunit.

In terms of biological role, one of the primary rRNA binding proteins, this protein initially binds near the 5'-end of the 23S rRNA. It is important during the early stages of 50S assembly. It makes multiple contacts with different domains of the 23S rRNA in the assembled 50S subunit and ribosome. Functionally, forms part of the polypeptide exit tunnel. This is Large ribosomal subunit protein uL4 from Pseudomonas fluorescens (strain Pf0-1).